Consider the following 381-residue polypeptide: Phospholipid scramblase family protein C343.06c (381 aa).

Residues 336–369 (QEILKNDQETTPSTNDSSSETKSPFLSDADLDQQ) form a disordered region. Residues 344–359 (ETTPSTNDSSSETKSP) show a composition bias toward polar residues.

It belongs to the phospholipid scramblase family.

It is found in the mitochondrion. The polypeptide is Phospholipid scramblase family protein C343.06c (Schizosaccharomyces pombe (strain 972 / ATCC 24843) (Fission yeast)).